Reading from the N-terminus, the 118-residue chain is Beta-2-microglobulin (118 aa).

Residues 1 to 20 (MARVVALVLLGLLSLTGLEA) form the signal peptide. An Ig-like C1-type domain is found at 22–115 (PRVPKVQVYS…LKDPLIVKWD (94 aa)). Cysteine 45 and cysteine 99 are joined by a disulfide.

Belongs to the beta-2-microglobulin family. As to quaternary structure, heterodimer of an alpha chain and a beta chain. Beta-2-microglobulin is the beta-chain of major histocompatibility complex class I molecules.

Its subcellular location is the secreted. Its function is as follows. Component of the class I major histocompatibility complex (MHC). Involved in the presentation of peptide antigens to the immune system. This Equus caballus (Horse) protein is Beta-2-microglobulin (B2M).